The following is a 534-amino-acid chain: Inorganic phosphate transporter 1-6 (534 aa).

The Cytoplasmic segment spans residues 1 to 29; that stretch reads MGGGGGEQQQLEVLHALDVAKTQWYHFTA. Residues 30 to 50 form a helical membrane-spanning segment; sequence IVVAGMGFFTDAYDLFCISLV. Residues 51 to 75 are Extracellular-facing; sequence TKLLGRIYYRVDGSPSPGTLPPHVS. A helical membrane pass occupies residues 76–96; that stretch reads ASVNGVAFVGTLSGQLFFGWL. The Cytoplasmic segment spans residues 97-104; sequence GDKLGRKR. A helical transmembrane segment spans residues 105 to 125; sequence VYGITLMLMVLCSLASALSFG. Over 126–127 the chain is Extracellular; it reads HT. Residues 128-148 traverse the membrane as a helical segment; it reads PTSVMATLCFFRFWLGFGIGG. Topologically, residues 149–168 are cytoplasmic; that stretch reads DYPLSATIMSEYANKKTRGA. Residues 169-189 form a helical membrane-spanning segment; sequence FIAAVFAMQGFGIITGGLVAI. Residues 190–216 lie on the Extracellular side of the membrane; sequence LVSASFRAAFPAPPYGEDPVASTPPQA. The helical transmembrane segment at 217-237 threads the bilayer; that stretch reads DFVWRIILMLGALPAALTYYW. Residues 238-294 lie on the Cytoplasmic side of the membrane; that stretch reads RTKMPETARYTALVANNAKQAAADMSKVLQVVEMRNIGNNGGSRRPFGLFSGEFVRR. A helical transmembrane segment spans residues 295–315; it reads HGLHLVGTSATWLLLDIAFYS. Residues 316 to 350 are Extracellular-facing; sequence QNLFQKDIFSAVGWIPKAATMSALEELFRIARAQT. A helical transmembrane segment spans residues 351–371; sequence LIALCGTVPGYWFTVALIDVV. Residues 372 to 375 are Cytoplasmic-facing; sequence GRFK. A helical transmembrane segment spans residues 376-396; the sequence is IQAVGFFMMTLFMLTLALPYH. Over 397-405 the chain is Extracellular; that stretch reads HWTAPGKNH. Residues 406-426 traverse the membrane as a helical segment; it reads VGFLLLYGLTFFFANFGPNST. The Cytoplasmic segment spans residues 427-445; it reads TFIVPAEIFPARLRATCHG. A helical transmembrane segment spans residues 446–466; the sequence is ISAASGKLGAIVGSFGFLYLA. The Extracellular segment spans residues 467–486; sequence QSPDRSKTEHGYPPGIGVRN. A helical membrane pass occupies residues 487 to 507; it reads SLFLLAACNLLGLLFTFLVPE. Topologically, residues 508–534 are cytoplasmic; that stretch reads SKGKSLEEMSGDAEAQEEAPPPLQTVL. The tract at residues 514 to 534 is disordered; the sequence is EEMSGDAEAQEEAPPPLQTVL.

Belongs to the major facilitator superfamily. Phosphate:H(+) symporter (TC 2.A.1.9) family. In terms of tissue distribution, highly expressed in leaves and at low levels in roots. Expressed in leaf xylem parenchyma cells.

Its subcellular location is the membrane. Functionally, high-affinity transporter for external inorganic phosphate (Pi). Probably involved in Pi uptake, translocation and internal transport throughout the plant. In Oryza sativa subsp. japonica (Rice), this protein is Inorganic phosphate transporter 1-6 (PHT1-6).